Reading from the N-terminus, the 454-residue chain is Cholesterol 7-desaturase nvd (454 aa).

2 helical membrane-spanning segments follow: residues 13 to 33 and 47 to 67; these read VLCPVGALLLCWVGSVLLGAG and TTLSRTPWLVVLVPLLVLWGW. A Rieske domain is found at 117–221; that stretch reads WYRALDSHLL…SCELNGMVFV (105 aa). Residues Cys-158, His-160, Cys-178, and His-181 each contribute to the [2Fe-2S] cluster site.

The protein belongs to the cholesterol 7-desaturase family. Requires [2Fe-2S] cluster as cofactor.

It is found in the membrane. It carries out the reaction cholesterol + NADPH + O2 + H(+) = 7-dehydrocholesterol + NADP(+) + 2 H2O. The catalysed reaction is cholesterol + NADH + O2 + H(+) = 7-dehydrocholesterol + NAD(+) + 2 H2O. The protein operates within steroid hormone biosynthesis; dafachronic acid biosynthesis. In terms of biological role, catalyzes the production of 7-dehydrocholesterol (7-DHC or cholesta-5,7-dien-3beta-ol) by inserting a double bond (desaturating) at the C7-C8 single bond of cholesterol. This reaction is the first step in the synthesis of the steroid hormone Delta(7)-dafachronic acid. This is Cholesterol 7-desaturase nvd (nvd) from Xenopus laevis (African clawed frog).